Reading from the N-terminus, the 1464-residue chain is Sister chromatid cohesion protein PDS5 homolog B-B (1464 aa).

Residues 383–419 (LLVNDQLLNFVRERTLDKRWRVRKEAMMGLAQIYKKY) form an HEAT repeat. The segment at 1126–1464 (KSTNVLGAVN…MKSELEGPLL (339 aa)) is disordered. The span at 1137-1155 (PLSSAGKQMQSKSSRMETV) shows a compositional bias: polar residues. A compositionally biased stretch (low complexity) spans 1156–1168 (SNASSGSNPSSPG). Residues 1177–1186 (TELDQIEYED) are compositionally biased toward acidic residues. Composition is skewed to basic and acidic residues over residues 1197-1215 (KKSD…VEKP), 1234-1244 (ELSKPAQEPKS), and 1265-1274 (WQEKRLKEDL). Basic residues predominate over residues 1286 to 1295 (KKGRRGRPPK). A DNA-binding region (a.T hook 1) is located at residues 1287-1299 (KGRRGRPPKSAKM). A compositionally biased stretch (acidic residues) spans 1325–1342 (PTDEEDHLEISEEQDSEN). The segment covering 1347 to 1357 (RKGRGSSKKTP) has biased composition (basic residues). The span at 1359–1373 (KSDSTDSALDTSRPT) shows a compositional bias: polar residues. DNA-binding regions (a.T hook) lie at residues 1375-1387 (QKRR…TPTV) and 1391-1403 (KSHV…VVSK). Over residues 1390–1400 (KKSHVGRPRKV) the composition is skewed to basic residues. Residues 1425 to 1435 (SNEEETADEEV) show a composition bias toward acidic residues. Positions 1441–1453 (GRRRTAKKRRWIQ) are enriched in basic residues. Positions 1455 to 1464 (MKSELEGPLL) are enriched in basic and acidic residues.

It belongs to the PDS5 family. In terms of assembly, interacts with the cohesin complex. Post-translationally, phosphorylated in mitotic cells.

Its subcellular location is the nucleus. Plays a role in androgen-induced proliferative arrest. Required for maintenance of sister chromatid cohesion during mitosis. The protein is Sister chromatid cohesion protein PDS5 homolog B-B (pds5b-b) of Xenopus laevis (African clawed frog).